The chain runs to 369 residues: Anhydro-N-acetylmuramic acid kinase (369 aa).

12–19 (GTSLDGVD) lines the ATP pocket.

The protein belongs to the anhydro-N-acetylmuramic acid kinase family.

It catalyses the reaction 1,6-anhydro-N-acetyl-beta-muramate + ATP + H2O = N-acetyl-D-muramate 6-phosphate + ADP + H(+). Its pathway is amino-sugar metabolism; 1,6-anhydro-N-acetylmuramate degradation. The protein operates within cell wall biogenesis; peptidoglycan recycling. Its function is as follows. Catalyzes the specific phosphorylation of 1,6-anhydro-N-acetylmuramic acid (anhMurNAc) with the simultaneous cleavage of the 1,6-anhydro ring, generating MurNAc-6-P. Is required for the utilization of anhMurNAc either imported from the medium or derived from its own cell wall murein, and thus plays a role in cell wall recycling. This chain is Anhydro-N-acetylmuramic acid kinase, found in Shigella flexneri serotype 5b (strain 8401).